Reading from the N-terminus, the 214-residue chain is uncharacterized protein (214 aa).

A helical transmembrane segment spans residues 10–30 (LLLAGIGGFMVGGLASWVVSS). Positions 147–157 (SSQANSQSTQP) are enriched in polar residues. Positions 147-166 (SSQANSQSTQPRDPIPTENF) are disordered.

It localises to the membrane. This is an uncharacterized protein from Schizosaccharomyces pombe (strain 972 / ATCC 24843) (Fission yeast).